Here is a 184-residue protein sequence, read N- to C-terminus: MMEMAVAKEEKFPTAKRFDIADIQVSREATAVKPKVVANMIKRAKRPLLVTGGQLLKDEKLVEFAVKFAEKGIPIAATAGSSKPLIERGIKPVSKTYTLHQITQFLQDEEFQGFDGNGNYDTVIFLGFLPYYLSRMLSSLKHFSKITTIAIDEFYQPHAKFSFTNLTKDRELYYSMLQEVLDNL.

This sequence belongs to the CdhB family. Heterotetramer of two alpha and two epsilon subunits. The ACDS complex is made up of alpha, epsilon, beta, gamma and delta subunits with a probable stoichiometry of (alpha(2)epsilon(2))(4)-beta(8)-(gamma(1)delta(1))(8).

In terms of biological role, part of a complex that catalyzes the reversible cleavage of acetyl-CoA, allowing autotrophic growth from CO(2). The alpha-epsilon subcomponent functions as a carbon monoxide dehydrogenase. The precise role of the epsilon subunit is unclear; it may have a stabilizing role within the alpha(2)epsilon(2) component and/or be involved in electron transfer to FAD during a potential FAD-mediated CO oxidation. This Archaeoglobus fulgidus (strain ATCC 49558 / DSM 4304 / JCM 9628 / NBRC 100126 / VC-16) protein is Acetyl-CoA decarbonylase/synthase complex subunit epsilon 1 (cdhB1).